A 201-amino-acid polypeptide reads, in one-letter code: ATP-dependent Clp protease proteolytic subunit (201 aa).

Residue S98 is the Nucleophile of the active site. The active site involves H123.

This sequence belongs to the peptidase S14 family. In terms of assembly, fourteen ClpP subunits assemble into 2 heptameric rings which stack back to back to give a disk-like structure with a central cavity, resembling the structure of eukaryotic proteasomes.

Its subcellular location is the cytoplasm. It carries out the reaction Hydrolysis of proteins to small peptides in the presence of ATP and magnesium. alpha-casein is the usual test substrate. In the absence of ATP, only oligopeptides shorter than five residues are hydrolyzed (such as succinyl-Leu-Tyr-|-NHMec, and Leu-Tyr-Leu-|-Tyr-Trp, in which cleavage of the -Tyr-|-Leu- and -Tyr-|-Trp bonds also occurs).. Cleaves peptides in various proteins in a process that requires ATP hydrolysis. Has a chymotrypsin-like activity. Plays a major role in the degradation of misfolded proteins. The sequence is that of ATP-dependent Clp protease proteolytic subunit from Rickettsia akari (strain Hartford).